The primary structure comprises 348 residues: Ketol-acid reductoisomerase (NADP(+)) (348 aa).

The KARI N-terminal Rossmann domain occupies 1 to 179; it reads MDVHYDADPA…GGTHAGVIET (179 aa). Residues 22 to 25, R45, S48, S50, and 80 to 83 each bind NADP(+); these read YGSQ and DQHQ. H105 is an active-site residue. NADP(+) is bound at residue G131. A KARI C-terminal knotted domain is found at 180-325; the sequence is TFKDETETDL…QTLRGMMPWL (146 aa). Mg(2+) is bound by residues D188, E192, E224, and E228. S249 is a binding site for substrate. The disordered stretch occupies residues 323–348; sequence PWLNGDETSADEDAPDAADTAPASSS. The segment covering 339–348 has biased composition (low complexity); sequence AADTAPASSS.

Belongs to the ketol-acid reductoisomerase family. The cofactor is Mg(2+).

The catalysed reaction is (2R)-2,3-dihydroxy-3-methylbutanoate + NADP(+) = (2S)-2-acetolactate + NADPH + H(+). It carries out the reaction (2R,3R)-2,3-dihydroxy-3-methylpentanoate + NADP(+) = (S)-2-ethyl-2-hydroxy-3-oxobutanoate + NADPH + H(+). It participates in amino-acid biosynthesis; L-isoleucine biosynthesis; L-isoleucine from 2-oxobutanoate: step 2/4. The protein operates within amino-acid biosynthesis; L-valine biosynthesis; L-valine from pyruvate: step 2/4. Its function is as follows. Involved in the biosynthesis of branched-chain amino acids (BCAA). Catalyzes an alkyl-migration followed by a ketol-acid reduction of (S)-2-acetolactate (S2AL) to yield (R)-2,3-dihydroxy-isovalerate. In the isomerase reaction, S2AL is rearranged via a Mg-dependent methyl migration to produce 3-hydroxy-3-methyl-2-ketobutyrate (HMKB). In the reductase reaction, this 2-ketoacid undergoes a metal-dependent reduction by NADPH to yield (R)-2,3-dihydroxy-isovalerate. The protein is Ketol-acid reductoisomerase (NADP(+)) of Salinibacter ruber (strain DSM 13855 / M31).